The sequence spans 142 residues: Peptide methionine sulfoxide reductase MsrB (142 aa).

A MsrB domain is found at 3-126 (KEELKKKLSP…NSAALRFIPF (124 aa)). The Nucleophile role is filled by C115.

It belongs to the MsrB Met sulfoxide reductase family.

It catalyses the reaction L-methionyl-[protein] + [thioredoxin]-disulfide + H2O = L-methionyl-(R)-S-oxide-[protein] + [thioredoxin]-dithiol. In Lactococcus lactis subsp. cremoris (strain SK11), this protein is Peptide methionine sulfoxide reductase MsrB.